The following is a 461-amino-acid chain: GTPase Der (461 aa).

EngA-type G domains are found at residues P3 to Q167 and L190 to S371. GTP contacts are provided by residues G9–S16, D56–W60, N119–E122, G196–S203, D249–M253, and N314–D317. One can recognise a KH-like domain in the interval K372–K456.

The protein belongs to the TRAFAC class TrmE-Era-EngA-EngB-Septin-like GTPase superfamily. EngA (Der) GTPase family. Associates with the 50S ribosomal subunit.

Functionally, GTPase that plays an essential role in the late steps of ribosome biogenesis. This is GTPase Der from Novosphingobium aromaticivorans (strain ATCC 700278 / DSM 12444 / CCUG 56034 / CIP 105152 / NBRC 16084 / F199).